The following is a 454-amino-acid chain: uncharacterized protein (454 aa).

The disordered stretch occupies residues 422–454; sequence EWLPPAHLDHGQPRTNSYFHPEKLLHDSDEDDP.

Belongs to the Rv1128c/1148c/1588c/1702c/1945/3466 family.

This is an uncharacterized protein from Mycobacterium tuberculosis (strain CDC 1551 / Oshkosh).